The chain runs to 122 residues: Small ribosomal subunit protein uS13 (122 aa).

Residues 94 to 122 (RGLPVRGQKTKTNARTRKGPRKTVAGKRK) are disordered.

It belongs to the universal ribosomal protein uS13 family. As to quaternary structure, part of the 30S ribosomal subunit. Forms a loose heterodimer with protein S19. Forms two bridges to the 50S subunit in the 70S ribosome.

Located at the top of the head of the 30S subunit, it contacts several helices of the 16S rRNA. In the 70S ribosome it contacts the 23S rRNA (bridge B1a) and protein L5 of the 50S subunit (bridge B1b), connecting the 2 subunits; these bridges are implicated in subunit movement. Contacts the tRNAs in the A and P-sites. This chain is Small ribosomal subunit protein uS13, found in Syntrophotalea carbinolica (strain DSM 2380 / NBRC 103641 / GraBd1) (Pelobacter carbinolicus).